The sequence spans 138 residues: Putative pre-16S rRNA nuclease (138 aa).

This sequence belongs to the YqgF nuclease family.

It is found in the cytoplasm. In terms of biological role, could be a nuclease involved in processing of the 5'-end of pre-16S rRNA. This Glaesserella parasuis serovar 5 (strain SH0165) (Haemophilus parasuis) protein is Putative pre-16S rRNA nuclease.